Consider the following 154-residue polypeptide: Large ribosomal subunit protein uL23 (154 aa).

A disordered region spans residues 1-39 (MAPAKADPSKKSDPKAQAAKVAKAVKSGSTLKKKSQKIR). Residues 15–26 (KAQAAKVAKAVK) are compositionally biased toward low complexity.

It belongs to the universal ribosomal protein uL23 family.

In terms of biological role, this protein binds to a specific region on the 26S rRNA. This is Large ribosomal subunit protein uL23 (RPL23A) from Nicotiana tabacum (Common tobacco).